We begin with the raw amino-acid sequence, 92 residues long: Small ribosomal subunit protein uS19 (92 aa).

The protein belongs to the universal ribosomal protein uS19 family.

Functionally, protein S19 forms a complex with S13 that binds strongly to the 16S ribosomal RNA. This Prochlorococcus marinus (strain MIT 9301) protein is Small ribosomal subunit protein uS19.